The following is a 517-amino-acid chain: Glutamate--tRNA ligase (517 aa).

The 'HIGH' region signature appears at 10–20; it reads PSPSGFLHVGG. Zn(2+)-binding residues include Cys107, Cys109, Cys134, and Asp136. The 'KMSKS' region signature appears at 250-254; that stretch reads KLSKR. Position 253 (Lys253) interacts with ATP.

This sequence belongs to the class-I aminoacyl-tRNA synthetase family. Glutamate--tRNA ligase type 1 subfamily. Monomer. Zn(2+) is required as a cofactor.

It is found in the cytoplasm. It carries out the reaction tRNA(Glu) + L-glutamate + ATP = L-glutamyl-tRNA(Glu) + AMP + diphosphate. Catalyzes the attachment of glutamate to tRNA(Glu) in a two-step reaction: glutamate is first activated by ATP to form Glu-AMP and then transferred to the acceptor end of tRNA(Glu). This chain is Glutamate--tRNA ligase, found in Leptospira biflexa serovar Patoc (strain Patoc 1 / ATCC 23582 / Paris).